The chain runs to 894 residues: Exocyst complex component 1 (894 aa).

Coiled coils occupy residues G152–L199 and Q205–I259. A disordered region spans residues S437–M495. Basic and acidic residues predominate over residues K438 to S459. The span at L460–S491 shows a compositional bias: low complexity. The residue at position 470 (S470) is a Phosphoserine. T471 bears the Phosphothreonine mark. Phosphoserine is present on residues S473, S487, and S501.

The protein belongs to the SEC3 family. As to quaternary structure, the exocyst complex is composed of EXOC1, EXOC2, EXOC3, EXOC4, EXOC5, EXOC6, EXOC7 and EXOC8. Interacts with EEF1A1. Interacts with SLC6A9; interaction increases the transporter capacity of SLC6A9 probably by promoting its insertion into the cell membrane.

It localises to the midbody. The protein localises to the midbody ring. The protein resides in the cytoplasm. It is found in the perinuclear region. Its subcellular location is the cell membrane. Its function is as follows. Component of the exocyst complex involved in the docking of exocytic vesicles with fusion sites on the plasma membrane. The sequence is that of Exocyst complex component 1 (Exoc1) from Mus musculus (Mouse).